A 74-amino-acid chain; its full sequence is Brevinin-2CG1 (74 aa).

The first 22 residues, 1–22, serve as a signal peptide directing secretion; the sequence is MFTMKKSMLVLFFLGTISLSLC. Residues 23 to 39 constitute a propeptide, removed in mature form; it reads EEERNADEDDGEMTEEV. The cysteines at positions 68 and 74 are disulfide-linked.

As to expression, expressed by the skin glands.

Its subcellular location is the secreted. Antimicrobial peptide active against a variety of Gram-positive and some Gram-negative bacterial strains. Has antifungal activity against a slime mold isolate. Has hemolytic activity against human erythrocytes. This is Brevinin-2CG1 from Amolops chunganensis (Chungan torrent frog).